The chain runs to 463 residues: uncharacterized protein (463 aa).

The 59-residue stretch at 9-67 folds into the TRAM domain; that stretch reads VLKKGQRFPLTIKRLGINGEGVGYFKRHVVFVPGALPGEEVVVEVTDVKPRFAEASIRK. The [4Fe-4S] cluster site is built by Cys-80, Cys-86, Cys-89, and Cys-169. S-adenosyl-L-methionine is bound by residues Gln-293, Tyr-322, Asp-343, and Asp-391. Cys-418 (nucleophile) is an active-site residue.

Belongs to the class I-like SAM-binding methyltransferase superfamily. RNA M5U methyltransferase family.

This is an uncharacterized protein from Halalkalibacterium halodurans (strain ATCC BAA-125 / DSM 18197 / FERM 7344 / JCM 9153 / C-125) (Bacillus halodurans).